Consider the following 974-residue polypeptide: Bifunctional glutamine synthetase adenylyltransferase/adenylyl-removing enzyme (974 aa).

Positions 1–464 (MKNAFLKTHL…HYAALFENEQ (464 aa)) are adenylyl removase. The interval 468-974 (LEIGNLVFTG…CSIFKQIMKH (507 aa)) is adenylyl transferase.

The protein belongs to the GlnE family. Requires Mg(2+) as cofactor.

It catalyses the reaction [glutamine synthetase]-O(4)-(5'-adenylyl)-L-tyrosine + phosphate = [glutamine synthetase]-L-tyrosine + ADP. The catalysed reaction is [glutamine synthetase]-L-tyrosine + ATP = [glutamine synthetase]-O(4)-(5'-adenylyl)-L-tyrosine + diphosphate. Its function is as follows. Involved in the regulation of glutamine synthetase GlnA, a key enzyme in the process to assimilate ammonia. When cellular nitrogen levels are high, the C-terminal adenylyl transferase (AT) inactivates GlnA by covalent transfer of an adenylyl group from ATP to specific tyrosine residue of GlnA, thus reducing its activity. Conversely, when nitrogen levels are low, the N-terminal adenylyl removase (AR) activates GlnA by removing the adenylyl group by phosphorolysis, increasing its activity. The regulatory region of GlnE binds the signal transduction protein PII (GlnB) which indicates the nitrogen status of the cell. In Bartonella quintana (strain Toulouse) (Rochalimaea quintana), this protein is Bifunctional glutamine synthetase adenylyltransferase/adenylyl-removing enzyme.